The sequence spans 89 residues: Large ribosomal subunit protein eL34 (89 aa).

A disordered region spans residues 1–29 (MSAPRFRNGTFKRTLKRVPGGRKVEHYKK). Residues 13–29 (RTLKRVPGGRKVEHYKK) are compositionally biased toward basic residues.

Belongs to the eukaryotic ribosomal protein eL34 family.

This Methanosphaera stadtmanae (strain ATCC 43021 / DSM 3091 / JCM 11832 / MCB-3) protein is Large ribosomal subunit protein eL34.